We begin with the raw amino-acid sequence, 138 residues long: Small ribosomal subunit protein uS11c (138 aa).

The disordered stretch occupies residues Met1 to Arg23.

The protein belongs to the universal ribosomal protein uS11 family. In terms of assembly, part of the 30S ribosomal subunit.

The protein localises to the plastid. Its subcellular location is the chloroplast. The sequence is that of Small ribosomal subunit protein uS11c from Amborella trichopoda.